The chain runs to 343 residues: Lipase chaperone (343 aa).

A helical membrane pass occupies residues 7–27 (IYLGIGLVALLMIFIYWLMPK).

Belongs to the lipase chaperone family.

It is found in the cell inner membrane. In terms of biological role, may be involved in the folding of the extracellular lipase during its passage through the periplasm. The sequence is that of Lipase chaperone (lifO) from Acinetobacter baylyi (strain ATCC 33305 / BD413 / ADP1).